The sequence spans 85 residues: Large ribosomal subunit protein bL31B (85 aa).

It belongs to the bacterial ribosomal protein bL31 family. Type B subfamily. In terms of assembly, part of the 50S ribosomal subunit.

The protein is Large ribosomal subunit protein bL31B of Aliivibrio salmonicida (strain LFI1238) (Vibrio salmonicida (strain LFI1238)).